The sequence spans 1023 residues: Transmembrane protein 132A (1023 aa).

An N-terminal signal peptide occupies residues 1 to 35 (MCARMAGRTTAAPRGPYGPWLCLLVALALDVVRVD). Residues 36–852 (CGQAPLDPVY…VTELELGMYA (817 aa)) lie on the Extracellular side of the membrane. Residues 212–246 (AAEGPGGCGSGEENDPGEQALPVGGVELRPADPPQ) are disordered. Asn280 is a glycosylation site (N-linked (GlcNAc...) asparagine). Disordered regions lie at residues 512 to 533 (WRVP…DEAE) and 766 to 839 (LPPA…MVPA). Residues 515–527 (PGPAEGPAEPAAE) show a composition bias toward low complexity. Ser529 bears the Phosphoserine; by FAM20C mark. The interval 611–916 (IEVRSPLSDS…RQLDRQSPGP (306 aa)) is binds to HSPA5/GRP78. The segment at 671-1023 (LPAPKQEVAL…NYMERIRGSS (353 aa)) is confers cellular localization similar to full-length form. Low complexity predominate over residues 778 to 790 (SSPAWSPPATEAT). Over residues 809–823 (GKFERAEEEARKEET) the composition is skewed to basic and acidic residues. The span at 824 to 836 (EAREEEEEEEEEM) shows a compositional bias: acidic residues. A helical transmembrane segment spans residues 853–873 (LLGVFCVAIFIFLVNGVVFVL). Topologically, residues 874–1023 (RYQRKEPPDS…NYMERIRGSS (150 aa)) are cytoplasmic. The tract at residues 905 to 961 (LSRQLDRQSPGPPKGEGSCPCESGGGGEAPTLAPGPPGGTTSSSSTLARKEAGGRRK) is disordered.

This sequence belongs to the TMEM132 family. Interacts with HSPA5/GRP78.

The protein localises to the golgi apparatus membrane. Its subcellular location is the endoplasmic reticulum membrane. In terms of biological role, may play a role in embryonic and postnatal development of the brain. Increased resistance to cell death induced by serum starvation in cultured cells. Regulates cAMP-induced GFAP gene expression via STAT3 phosphorylation. This Homo sapiens (Human) protein is Transmembrane protein 132A (TMEM132A).